The chain runs to 480 residues: EGF-like repeat and discoidin I-like domain-containing protein 3 (480 aa).

The signal sequence occupies residues 1–23 (MKRSVAVWLLVGLSLGVPQFGKG). The EGF-like 1 domain maps to 24 to 60 (DICDPNPCENGGICLPGLADGSFSCECPDGFTDPNCS). Cystine bridges form between C26–C37, C31–C48, and C50–C59. The O-linked (GalNAc...) threonine glycan is linked to T73. EGF-like domains lie at 74–117 (SAGP…IHCQ) and 119–155 (NINE…RNCQ). Intrachain disulfides connect C78–C89, C83–C105, and C107–C116. An O-linked (Fuc...) threonine glycan is attached at T88. The Cell attachment site motif lies at 96–98 (RGD). Positions 119, 120, and 122 each coordinate Ca(2+). 6 cysteine pairs are disulfide-bonded: C123–C134, C128–C143, C145–C154, C158–C314, C301–C305, and C319–C476. D136 and L137 together coordinate Ca(2+). A glycan (N-linked (GlcNAc...) asparagine) is linked at N140. F5/8 type C domains are found at residues 158–314 (CSGP…LLGC) and 319–476 (CSEP…LLGC).

The protein localises to the secreted. Promotes adhesion of endothelial cells through interaction with the alpha-v/beta-3 integrin receptor. Inhibits formation of vascular-like structures. May be involved in regulation of vascular morphogenesis of remodeling in embryonic development. This is EGF-like repeat and discoidin I-like domain-containing protein 3 (EDIL3) from Homo sapiens (Human).